A 92-amino-acid chain; its full sequence is Small ribosomal subunit protein uS15c (92 aa).

The protein belongs to the universal ribosomal protein uS15 family. Part of the 30S ribosomal subunit.

The protein resides in the plastid. The protein localises to the chloroplast. The chain is Small ribosomal subunit protein uS15c (rps15) from Guizotia abyssinica (Niger).